Reading from the N-terminus, the 187-residue chain is Threonylcarbamoyl-AMP synthase (187 aa).

In terms of domain architecture, YrdC-like spans glutamine 3–glycine 187.

It belongs to the SUA5 family. TsaC subfamily.

The protein localises to the cytoplasm. It carries out the reaction L-threonine + hydrogencarbonate + ATP = L-threonylcarbamoyladenylate + diphosphate + H2O. In terms of biological role, required for the formation of a threonylcarbamoyl group on adenosine at position 37 (t(6)A37) in tRNAs that read codons beginning with adenine. Catalyzes the conversion of L-threonine, HCO(3)(-)/CO(2) and ATP to give threonylcarbamoyl-AMP (TC-AMP) as the acyladenylate intermediate, with the release of diphosphate. The polypeptide is Threonylcarbamoyl-AMP synthase (Shewanella pealeana (strain ATCC 700345 / ANG-SQ1)).